A 492-amino-acid polypeptide reads, in one-letter code: Adenosylhomocysteinase-like 2 (492 aa).

A disordered region spans residues 43-64 (FTGSSDEEDVSPKDNHQRNSAG). The substrate site is built by Asp-192 and Glu-217. NAD(+) is bound at residue 218–220 (SVT). 2 residues coordinate substrate: Lys-247 and Asp-251. Residues 283–288 (GDVGKG), Glu-304, 360–362 (MGH), Asn-407, Lys-486, 486–490 (KANYY), and Tyr-490 each bind NAD(+).

Belongs to the adenosylhomocysteinase family. It depends on NAD(+) as a cofactor.

Its function is as follows. Might play a role in the regulation of methionine metabolism. In Drosophila melanogaster (Fruit fly), this protein is Adenosylhomocysteinase-like 2.